We begin with the raw amino-acid sequence, 521 residues long: 4-cresol dehydrogenase [hydroxylating] flavoprotein subunit (521 aa).

One can recognise an FAD-binding PCMH-type domain in the interval 54–268 (AAHAPSAAVT…VEIVDALRPL (215 aa)). The residue at position 384 (Y384) is an O-8alpha-FAD tyrosine.

In terms of assembly, tetramer of two cytochrome subunits and two flavoprotein subunits. The cofactor is FAD.

The enzyme catalyses 4-methylphenol + 4 oxidized [azurin] + H2O = 4 reduced [azurin] + 4-hydroxybenzaldehyde + 4 H(+). It functions in the pathway aromatic compound metabolism; p-cresol degradation. Catalyzes the azurin dependent hydroxylation of the methyl group of 4-methylphenol to form 4-hydroxybenzaldehyde. This chain is 4-cresol dehydrogenase [hydroxylating] flavoprotein subunit (pchF), found in Pseudomonas putida (Arthrobacter siderocapsulatus).